We begin with the raw amino-acid sequence, 159 residues long: Ribosomal RNA large subunit methyltransferase H (159 aa).

Residues leucine 76, glycine 108, and 127–132 each bind S-adenosyl-L-methionine; that span reads LSDMTF.

The protein belongs to the RNA methyltransferase RlmH family. In terms of assembly, homodimer.

The protein resides in the cytoplasm. The enzyme catalyses pseudouridine(1915) in 23S rRNA + S-adenosyl-L-methionine = N(3)-methylpseudouridine(1915) in 23S rRNA + S-adenosyl-L-homocysteine + H(+). Functionally, specifically methylates the pseudouridine at position 1915 (m3Psi1915) in 23S rRNA. This Acetivibrio thermocellus (strain ATCC 27405 / DSM 1237 / JCM 9322 / NBRC 103400 / NCIMB 10682 / NRRL B-4536 / VPI 7372) (Clostridium thermocellum) protein is Ribosomal RNA large subunit methyltransferase H.